Reading from the N-terminus, the 320-residue chain is Ferrochelatase (320 aa).

His-194 and Glu-275 together coordinate Fe cation.

This sequence belongs to the ferrochelatase family. Monomer.

Its subcellular location is the cytoplasm. It carries out the reaction heme b + 2 H(+) = protoporphyrin IX + Fe(2+). Its pathway is porphyrin-containing compound metabolism; protoheme biosynthesis; protoheme from protoporphyrin-IX: step 1/1. Functionally, catalyzes the ferrous insertion into protoporphyrin IX. This Escherichia coli O157:H7 (strain EC4115 / EHEC) protein is Ferrochelatase.